Consider the following 21-residue polypeptide: Venom peptide Tv1 (21 aa).

Disulfide bonds link Cys-4-Cys-20, Cys-5-Cys-21, and Cys-7-Cys-16.

In terms of tissue distribution, expressed by the salivary gland. This peptide is considered as a venom peptide.

It is found in the secreted. Injections of 20 uM of this synthetic peptide (Ile) causes partial paralysis to polychaete worms (Nereis virens), the natural prey of terebrid snails. This paralysis may be due to an inhibition of nicotinic receptors at the neuromuscular junction. This Terebra variegata (Variegate auger snail) protein is Venom peptide Tv1.